Consider the following 220-residue polypeptide: MRSSLTMVGTLWAFLSLVTAVTSSTSYFLPYWLFGSQMGKPVSFSTFRRCNYPVRGEGHSLIMVEECGRYASFNAIPSLAWQMCTVVTGAGCALLLLVALAAVLGCCMEELISRMMGRCMGAAQFVGGLLISSGCALYPLGWNSPEIMQTCGNVSNQFQLGTCRLGWAYYCAGGGAAAAMLICTWLSCFAGRNPKPVILVESIMRNTNSYAMELDHCLKP.

The first 20 residues, methionine 1–alanine 20, serve as a signal peptide directing secretion. 2 helical membrane passes run valine 86 to cysteine 106 and alanine 122 to tryptophan 142. The N-linked (GlcNAc...) asparagine glycan is linked to asparagine 153. A helical membrane pass occupies residues leucine 165–tryptophan 185.

Belongs to the LHFP family. In terms of tissue distribution, widely expressed. Expressed at high levels in lung, thymus, skeletal muscle, colon and ovary.

It localises to the membrane. This is LHFPL tetraspan subfamily member 1 protein from Homo sapiens (Human).